The following is a 94-amino-acid chain: DNA-directed RNA polymerase subunit Rpo11 (94 aa).

This sequence belongs to the archaeal Rpo11/eukaryotic RPB11/RPC19 RNA polymerase subunit family. Part of the RNA polymerase complex.

The protein resides in the cytoplasm. The catalysed reaction is RNA(n) + a ribonucleoside 5'-triphosphate = RNA(n+1) + diphosphate. In terms of biological role, DNA-dependent RNA polymerase (RNAP) catalyzes the transcription of DNA into RNA using the four ribonucleoside triphosphates as substrates. The chain is DNA-directed RNA polymerase subunit Rpo11 from Thermococcus kodakarensis (strain ATCC BAA-918 / JCM 12380 / KOD1) (Pyrococcus kodakaraensis (strain KOD1)).